The chain runs to 128 residues: uncharacterized protein (128 aa).

The VOC domain maps to 2-127; the sequence is KLLQIRLLVN…DHNLIEIYKM (126 aa). The Ni(2+) site is built by Glu-48 and Glu-123.

The protein belongs to the glyoxalase I family.

This is an uncharacterized protein from Bacillus subtilis (strain 168).